Here is a 596-residue protein sequence, read N- to C-terminus: Zinc finger CCCH domain-containing protein 64 (596 aa).

Disordered regions lie at residues 243–263 (LSPTPTSTMSPAELSAKPPKT) and 272–291 (DGAAESKKRPNDSDSDSQYW). C3H1-type zinc fingers lie at residues 303-331 (SQGEKLCFKFVCSGSCPRGEDCHFQHNAE) and 335-363 (QCRRGVCLDLIIKGKCEKGPECSYKHEFQ).

This chain is Zinc finger CCCH domain-containing protein 64, found in Arabidopsis thaliana (Mouse-ear cress).